A 430-amino-acid chain; its full sequence is MTIISDVYAREVLDSRGNPTIEVEVYLESGVLGRAIVPSGASTGAFEAVELRDGDKGRYLGKGVLKAVENVNDIIAPEITGLDALDQVAIDKIMLDLDGTPNKAKLGANAILGVSMAVAKAAAEALDIPLFQYLGGVNAKQLPVPMMNILNGGSHADNNVDIQEFMVMPVGAKTFKEALRMGTEIYHNLKDVLKSKGLATGVGDEGGFAPNLSSNEEALQIIMEAIEAAGYKPGVDIKLALDVAATEFYDEDEKLYKLTGEGVTKTAEEMVDFYEALVKKYPIVSIEDGLSEDDWEGWRVMTERLGDNIQIVGDDLFVTNTERLKKGIQTKTANSILVKLNQIGTITETLDAIEMAKRAGYTTVISHRSGETEDATIADIAVAVNAGQIKTGAPARTDRVAKYNQLLRIEDMLGFTGQYIGNEVFYNIKK.

(2R)-2-phosphoglycerate is bound at residue Q163. Catalysis depends on E205, which acts as the Proton donor. The Mg(2+) site is built by D242, E287, and D314. Residues K339, R368, S369, and K390 each coordinate (2R)-2-phosphoglycerate. Residue K339 is the Proton acceptor of the active site.

This sequence belongs to the enolase family. Mg(2+) serves as cofactor.

It localises to the cytoplasm. The protein localises to the secreted. Its subcellular location is the cell surface. It catalyses the reaction (2R)-2-phosphoglycerate = phosphoenolpyruvate + H2O. The protein operates within carbohydrate degradation; glycolysis; pyruvate from D-glyceraldehyde 3-phosphate: step 4/5. Catalyzes the reversible conversion of 2-phosphoglycerate (2-PG) into phosphoenolpyruvate (PEP). It is essential for the degradation of carbohydrates via glycolysis. The sequence is that of Enolase from Alkaliphilus metalliredigens (strain QYMF).